Consider the following 603-residue polypeptide: Extracellular basic protease (603 aa).

The N-terminal stretch at Met1–Ala21 is a signal peptide. Residues Gly22 to Lys132 constitute a propeptide that is removed on maturation. Residues Gln143–Val468 enclose the Peptidase S8 domain. The active-site Charge relay system is Asp173. A disordered region spans residues Pro197 to Cys221. 2 disulfide bridges follow: Cys221–Cys273 and Cys315–Cys352. His237 serves as the catalytic Charge relay system. The active-site Charge relay system is Ser409. Positions Arg477–Phe603 are excised as a propeptide. The 126-residue stretch at Ala478–Phe603 folds into the P/Homo B domain.

Belongs to the peptidase S8 family.

Its subcellular location is the secreted. In Dichelobacter nodosus (Bacteroides nodosus), this protein is Extracellular basic protease (bprV).